The primary structure comprises 255 residues: Bouquet formation protein 3 (255 aa).

The next 8 membrane-spanning stretches (helical) occupy residues 13-33, 48-68, 72-94, 99-116, 132-152, 172-192, 205-225, and 235-255; these read IKVS…NYHL, IPYW…LLLQ, LGYG…YYLT, IAWA…ARCF, YSVS…LNYI, SLVA…GYVI, SLFL…SILF, and VVGA…ALSL.

The protein localises to the endoplasmic reticulum membrane. It is found in the nucleus inner membrane. Connects telomeres to the nuclear envelop (NE) during both vegetative growth and meiosis. This connection ensures clustering of telomeres to the spindle pole body (SPB) when cells enter meiotic prophase. The chain is Bouquet formation protein 3 (bqt3) from Schizosaccharomyces pombe (strain 972 / ATCC 24843) (Fission yeast).